The chain runs to 349 residues: D-arabinitol dehydrogenase 1 (349 aa).

Residues C46, H67, C97, C100, C103, C111, and E151 each contribute to the Zn(2+) site.

It belongs to the zinc-containing alcohol dehydrogenase family. Zn(2+) serves as cofactor.

Its subcellular location is the cell projection. It catalyses the reaction D-arabinitol + NADP(+) = D-xylulose + NADPH + H(+). The catalysed reaction is D-arabinitol + NADP(+) = D-ribulose + NADPH + H(+). Its function is as follows. D-arabinitol dehydrogenase which mostly produces D-arabinitol in haustoria, the appendages of the parasitic fungus that penetrate the host's tissue and draws nutrients from it. D-arabinitol accumulation may serve as a carbohydrate storage compound. D-arabinitol is also capable of quenching reactive oxygen species involved in host plant defense reactions, thus providing protection for the rust fungus during the pathogenic interaction. In Uromyces fabae (Rust fungus), this protein is D-arabinitol dehydrogenase 1 (ARD1).